We begin with the raw amino-acid sequence, 61 residues long: MDPNCSCAAGGSCTCAGSCKCKDCKCTSCKKSCCSCCPVGCAKCAQGCICKGASDKCSCCA.

At Met1 the chain carries N-acetylmethionine. The tract at residues 1–29 is beta; that stretch reads MDPNCSCAAGGSCTCAGSCKCKDCKCTSC. A divalent metal cation contacts are provided by Cys5, Cys7, Cys13, Cys15, Cys19, Cys21, Cys24, Cys26, Cys29, Cys33, Cys34, Cys36, Cys37, Cys41, Cys44, Cys48, Cys50, and Cys57. Positions 30-61 are alpha; the sequence is KKSCCSCCPVGCAKCAQGCICKGASDKCSCCA. Position 58 is a phosphoserine (Ser58). A divalent metal cation-binding residues include Cys59 and Cys60.

This sequence belongs to the metallothionein superfamily. Type 1 family. In terms of assembly, interacts with EOLA1.

Functionally, metallothioneins have a high content of cysteine residues that bind various heavy metals; these proteins are transcriptionally regulated by both heavy metals and glucocorticoids. This Sus scrofa (Pig) protein is Metallothionein-2A (MT2A).